We begin with the raw amino-acid sequence, 257 residues long: Transmembrane protein 101 (257 aa).

Transmembrane regions (helical) follow at residues 21–40, 52–72, 77–97, 110–130, 139–159, 182–202, 206–226, and 233–253; these read VLLT…LYAE, VPYL…MSFG, WFAL…YVGG, YSRT…AGEL, SLQS…AYSL, LFFV…YVTL, ILAV…AYWH, and FWNQ…AVIL.

The protein localises to the membrane. May activate NF-kappa-B signaling pathways. In Bos taurus (Bovine), this protein is Transmembrane protein 101 (TMEM101).